A 208-amino-acid chain; its full sequence is Methyl-CpG-binding domain protein 3-like 5 (208 aa).

It belongs to the MBD3L family.

This is Methyl-CpG-binding domain protein 3-like 5 (MBD3L5) from Homo sapiens (Human).